Here is a 285-residue protein sequence, read N- to C-terminus: Glutamate racemase (285 aa).

Substrate is bound by residues 28–29 and 60–61; these read DS and YG. The active-site Proton donor/acceptor is C92. A substrate-binding site is contributed by 93–94; it reads NT. Residue C204 is the Proton donor/acceptor of the active site. Residue 205–206 coordinates substrate; sequence TH.

It belongs to the aspartate/glutamate racemases family.

It carries out the reaction L-glutamate = D-glutamate. It participates in cell wall biogenesis; peptidoglycan biosynthesis. Provides the (R)-glutamate required for cell wall biosynthesis. The polypeptide is Glutamate racemase (Escherichia coli O9:H4 (strain HS)).